The following is a 257-amino-acid chain: Hydroxyacylglutathione hydrolase (257 aa).

Zn(2+) is bound by residues His-54, His-56, Asp-58, His-59, His-113, Asp-137, and His-175.

Belongs to the metallo-beta-lactamase superfamily. Glyoxalase II family. Monomer. It depends on Zn(2+) as a cofactor.

The enzyme catalyses an S-(2-hydroxyacyl)glutathione + H2O = a 2-hydroxy carboxylate + glutathione + H(+). It functions in the pathway secondary metabolite metabolism; methylglyoxal degradation; (R)-lactate from methylglyoxal: step 2/2. In terms of biological role, thiolesterase that catalyzes the hydrolysis of S-D-lactoyl-glutathione to form glutathione and D-lactic acid. The protein is Hydroxyacylglutathione hydrolase of Crocosphaera subtropica (strain ATCC 51142 / BH68) (Cyanothece sp. (strain ATCC 51142)).